The primary structure comprises 565 residues: Perivitellin-2 67 kDa subunit (565 aa).

The N-terminal stretch at 1 to 26 (MSQLRWWVVSQVLLLIAICSLDHSEG) is a signal peptide. The MACPF domain occupies 27-340 (ARVCPKIVPG…AKVANLDRLT (314 aa)). The tract at residues 387-565 (VPAWFSDRTT…CGMSWALIAK (179 aa)) is invertebrate MACPF Accessory Domain (IMAD).

As to quaternary structure, perivitellin-2 is a dimer of heterodimers held together head-to-tail by non-covalent forces. The heterodimer is composed of the tachylectin subunit (31 kDa) and the MACPF subunit (67 kDa) that are disulfide-linked. PV2 is a very high density lipoprotein (VHDL). It contains 3.75% of lipids. The major lipid classes are free sterols and phospholipids and also have significant quantities of energy-providing triacylglycerides and free fatty acids. As to expression, produced by albumen secretory cells. Found in developing eggs.

It is found in the secreted. The protein localises to the target cell membrane. Functionally, the egg defensive protein perivitellin-2 is a pore-forming two-subunit glycoprotein that affects both the nervous and digestive systems of mammals. In addition, it is a source of both structural and energetic molecules during embryonic development. The tachylectin subunit (31 kDa) binds target membranes while the MACPF subunit (67 kDa) disrupts lipid bilayers forming large pores (inner diameter of about 5.6 nm) altering the plasma membrance conductance. Both in vivo and in vitro, the protein shows wide pH range stability and is resistant to enzymatic proteolysis from gastrointestinal environments. It is cytotoxic to both epithelial and immune cells from the digestive system of mammals. It induces enterocyte death by a lytic mechanism and disrupts enterocyte monolayers in a dose-dependent manner. After oral administration to mice, it binds enterocytes and induces large dose-dependent morphological changes on their small intestine mucosa, reducing the absorptive surface. Additionally, it is detected in the Peyer's patches where it activates lymphoid follicles and triggers apoptosis. The toxin can also traverse the intestinal barrier and induce oral adaptive immunity with evidence of circulating antibody response. The toxin also shows hemagglutination properties thanks to the tachylectin subunit, but has no hemolytic activity. In addition to enterotoxin activity, the toxin also acts as a neurotoxin, since an intraperitoneal injection can induce paralysis of the mice rear limbs, followed by death. This chain is Perivitellin-2 67 kDa subunit, found in Pomacea maculata (Giant applesnail).